We begin with the raw amino-acid sequence, 249 residues long: UPF0246 protein Lreu_0493 (249 aa).

This sequence belongs to the UPF0246 family.

The chain is UPF0246 protein Lreu_0493 from Limosilactobacillus reuteri (strain DSM 20016) (Lactobacillus reuteri).